A 343-amino-acid chain; its full sequence is Ribosomal RNA small subunit methyltransferase C (343 aa).

Belongs to the methyltransferase superfamily. RsmC family. Monomer.

The protein localises to the cytoplasm. The enzyme catalyses guanosine(1207) in 16S rRNA + S-adenosyl-L-methionine = N(2)-methylguanosine(1207) in 16S rRNA + S-adenosyl-L-homocysteine + H(+). Its function is as follows. Specifically methylates the guanine in position 1207 of 16S rRNA in the 30S particle. This Escherichia coli (strain SMS-3-5 / SECEC) protein is Ribosomal RNA small subunit methyltransferase C.